Consider the following 553-residue polypeptide: Methionine--tRNA ligase (553 aa).

The 'HIGH' region motif lies at 12-22; that stretch reads PYANSQLHLGH. Cys-144, Cys-147, Cys-157, and Cys-160 together coordinate Zn(2+). The 'KMSKS' region signature appears at 332-336; sequence KFSKS. Lys-335 contacts ATP.

The protein belongs to the class-I aminoacyl-tRNA synthetase family. MetG type 1 subfamily. Monomer. The cofactor is Zn(2+).

Its subcellular location is the cytoplasm. The enzyme catalyses tRNA(Met) + L-methionine + ATP = L-methionyl-tRNA(Met) + AMP + diphosphate. Is required not only for elongation of protein synthesis but also for the initiation of all mRNA translation through initiator tRNA(fMet) aminoacylation. The chain is Methionine--tRNA ligase from Dehalococcoides mccartyi (strain ATCC BAA-2266 / KCTC 15142 / 195) (Dehalococcoides ethenogenes (strain 195)).